Consider the following 108-residue polypeptide: Beta-defensin 126 (108 aa).

A signal peptide spans 1-20 (MKSLLFTLAVFMLLAQLVSG). Residues 21–63 (NWYVKKCLNDVGICKKKCKPGEMHIKNGWATCGKQRDCCVPAD) form an in vitro binds to LPS, mediates antimicrobial activity and inhibits LPS-mediated inflammation region. Disulfide bonds link cysteine 27–cysteine 58, cysteine 34–cysteine 52, and cysteine 38–cysteine 59.

It belongs to the beta-defensin family. As to quaternary structure, homodimer or homooligomer; disulfide-linked. O-glycosylated; glycans contain alpha(2,3)-linked sialic acids.

The protein localises to the secreted. Highly glycosylated atypical beta-defensin involved in several aspects of sperm function. Facilitates sperm transport in the female reproductive tract and contributes to sperm protection against immunodetection; both functions are probably implicating the negative surface charge provided by its O-linked oligosaccharides in the sperm glycocalyx. Involved in binding of sperm to oviductal epithelial cells to form a sperm reservoir until ovulation. Release from the sperm surface during capacitation and ovaluation by an elevation of oviductal fluid pH is unmasking other surface components and allows sperm to penetrate the cumulus matrix and bind to the zona pellucida of the oocyte. In vitro has antimicrobial activity and may inhibit LPS-mediated inflammation. This is Beta-defensin 126 (DEFB126) from Pan troglodytes (Chimpanzee).